Reading from the N-terminus, the 301-residue chain is Fatty acid elongase 3 (301 aa).

A run of 7 helical transmembrane segments spans residues 31–51, 64–84, 122–142, 161–181, 187–207, 219–239, and 257–277; these read VPYI…KSIM, IVWN…TVPY, ALAD…LFAL, VIFL…FAYV, GLWF…YYFV, FAPI…IVVC, and FSLH…SQLF. A HxxHH motif motif is present at residues 165 to 169; the sequence is HWYHH. The active-site Nucleophile is His-168.

The protein belongs to the ELO family.

Its subcellular location is the endoplasmic reticulum membrane. The enzyme catalyses an acyl-CoA + malonyl-CoA + H(+) = a 3-oxoacyl-CoA + CO2 + CoA. The protein operates within lipid metabolism; fatty acid biosynthesis. Its function is as follows. Involved in the synthesis of fatty acids. Elongates C14 fatty acids to C18. The sequence is that of Fatty acid elongase 3 from Trypanosoma brucei brucei (strain 927/4 GUTat10.1).